We begin with the raw amino-acid sequence, 444 residues long: MHILVVSVNYRTAPVEFREKLTFQAAELEQAMTTLQNQKSVLENVIVSTCNRTEVYAVVDQLHTGRYYIKKFLADWFQLEIEEVAPYLTIFEQDGAIDHLFRVTCGLDSMVVGETQILGQIKDSFLEAQQVKATGTIFNELFKQVITLAKRAHSETTIGESAMSVSYAAVELGKKIFGELTDCHVLILGAGKMGELALQNLYGSGARKVTVMNRTLSKAEIMAEKYMGHAKPLSELQCALLEADILISSTGASDYVITKEMMTKVEKMRSGRPLFMVDIAVPRDIDPAIDELEGSFLYDIDDLQGVVEANRAERLKEAEKIQFMIEEEIVVFKTWLSTLGVVPLISALRDKALAIQSETMESLERKIPTLSDRERKVISKHTKSIINQLLKDPILVAKEIAAEEGADEKLALFAKIFDLEMEDVESRAEEVEHKRAWTPSVPSL.

Residues 49-52 (TCNR), serine 109, 114-116 (ETQ), and glutamine 120 each bind substrate. Cysteine 50 acts as the Nucleophile in catalysis. 189–194 (GAGKMG) is an NADP(+) binding site.

Belongs to the glutamyl-tRNA reductase family. In terms of assembly, homodimer.

The enzyme catalyses (S)-4-amino-5-oxopentanoate + tRNA(Glu) + NADP(+) = L-glutamyl-tRNA(Glu) + NADPH + H(+). It participates in porphyrin-containing compound metabolism; protoporphyrin-IX biosynthesis; 5-aminolevulinate from L-glutamyl-tRNA(Glu): step 1/2. In terms of biological role, catalyzes the NADPH-dependent reduction of glutamyl-tRNA(Glu) to glutamate 1-semialdehyde (GSA). The polypeptide is Glutamyl-tRNA reductase (Bacillus cereus (strain AH187)).